We begin with the raw amino-acid sequence, 220 residues long: Adenylate kinase (220 aa).

Position 10–15 (10–15 (GSGKST)) interacts with ATP. Residues 30-59 (ASGDIIRAEIKARTPLGIEMERYLSRGDLI) are NMP. Residues R36, 57-59 (DLI), 83-86 (GYPR), and Q90 each bind AMP. An LID region spans residues 124–161 (GRRICSKCGAVYHVEFNPPKVPGKCDICGGELIQRPDD). R125 is a binding site for ATP. Residues C128 and C131 each coordinate Zn(2+). ATP is bound at residue 134–135 (VY). Zn(2+)-binding residues include C148 and C151. AMP is bound by residues R158 and R169. G197 lines the ATP pocket.

The protein belongs to the adenylate kinase family. In terms of assembly, monomer.

The protein localises to the cytoplasm. It carries out the reaction AMP + ATP = 2 ADP. It functions in the pathway purine metabolism; AMP biosynthesis via salvage pathway; AMP from ADP: step 1/1. Catalyzes the reversible transfer of the terminal phosphate group between ATP and AMP. Plays an important role in cellular energy homeostasis and in adenine nucleotide metabolism. The sequence is that of Adenylate kinase from Pyrococcus abyssi (strain GE5 / Orsay).